Reading from the N-terminus, the 495-residue chain is Glutamate--tRNA ligase 1 (495 aa).

Residues Pro10–Gly20 carry the 'HIGH' region motif. A 'KMSKS' region motif is present at residues Lys251–Arg255. An ATP-binding site is contributed by Lys254.

Belongs to the class-I aminoacyl-tRNA synthetase family. Glutamate--tRNA ligase type 1 subfamily. Monomer.

The protein localises to the cytoplasm. It carries out the reaction tRNA(Glu) + L-glutamate + ATP = L-glutamyl-tRNA(Glu) + AMP + diphosphate. In terms of biological role, catalyzes the attachment of glutamate to tRNA(Glu) in a two-step reaction: glutamate is first activated by ATP to form Glu-AMP and then transferred to the acceptor end of tRNA(Glu). In Syntrophomonas wolfei subsp. wolfei (strain DSM 2245B / Goettingen), this protein is Glutamate--tRNA ligase 1.